Here is a 173-residue protein sequence, read N- to C-terminus: Sterile alpha motif domain-containing protein 5 (173 aa).

The SAM domain maps to 1–65 (MCTNIVYEWL…LEAVRRLREQ (65 aa)). Residues 75-119 (TLEPQPAPPGPPADAVPTGRRGEPCGGPAQGTRGDSRGHTTAPRS) form a disordered region. Over residues 79–88 (QPAPPGPPAD) the composition is skewed to pro residues.

Interacts promiscuously (via SAM domain) with EPHA5, EPHA6, EPHA7, EPHA8, EPHB1, EPHB2, EPHB3 and EPHB4 (via SAM domain) (in vitro). As to expression, detected in biliary epithelial cells on bile ducts at the hepatic hilum (at protein level).

The protein resides in the cytoplasm. In Homo sapiens (Human), this protein is Sterile alpha motif domain-containing protein 5 (SAMD5).